The following is a 127-amino-acid chain: Small ribosomal subunit protein eS6 (127 aa).

This sequence belongs to the eukaryotic ribosomal protein eS6 family.

This is Small ribosomal subunit protein eS6 from Picrophilus torridus (strain ATCC 700027 / DSM 9790 / JCM 10055 / NBRC 100828 / KAW 2/3).